A 1025-amino-acid chain; its full sequence is Beta-galactosidase (1025 aa).

Asparagine 105 and aspartate 204 together coordinate substrate. Aspartate 204 lines the Na(+) pocket. Positions 417, 419, and 462 each coordinate Mg(2+). Residues glutamate 462 and 538-541 each bind substrate; that span reads EYAH. Glutamate 462 acts as the Proton donor in catalysis. Glutamate 538 functions as the Nucleophile in the catalytic mechanism. Mg(2+) is bound at residue asparagine 598. 2 residues coordinate Na(+): phenylalanine 602 and asparagine 605. Substrate contacts are provided by asparagine 605 and tryptophan 1003.

Belongs to the glycosyl hydrolase 2 family. In terms of assembly, homotetramer. It depends on Mg(2+) as a cofactor. Requires Na(+) as cofactor.

The catalysed reaction is Hydrolysis of terminal non-reducing beta-D-galactose residues in beta-D-galactosides.. In Aeromonas hydrophila subsp. hydrophila (strain ATCC 7966 / DSM 30187 / BCRC 13018 / CCUG 14551 / JCM 1027 / KCTC 2358 / NCIMB 9240 / NCTC 8049), this protein is Beta-galactosidase.